The sequence spans 763 residues: Phosphoglycerol transferase I (763 aa).

4 helical membrane-spanning segments follow: residues 1-21 (MSEL…AWKA), 26-46 (WWFA…ITLF), 77-97 (ILPG…LGWI), and 108-128 (FGYS…SPAF).

It belongs to the OpgB family.

The protein resides in the cell inner membrane. The catalysed reaction is a phosphatidylglycerol + a membrane-derived-oligosaccharide D-glucose = a 1,2-diacyl-sn-glycerol + a membrane-derived-oligosaccharide 6-(glycerophospho)-D-glucose.. It participates in glycan metabolism; osmoregulated periplasmic glucan (OPG) biosynthesis. Its function is as follows. Transfers a phosphoglycerol residue from phosphatidylglycerol to the membrane-bound nascent glucan backbones. This Escherichia coli (strain SMS-3-5 / SECEC) protein is Phosphoglycerol transferase I.